A 433-amino-acid chain; its full sequence is F-box only protein 15 (433 aa).

In terms of domain architecture, F-box spans 1–41 (MPSEILVKILSYLDAVTLVCIGCVSRRFYHLADDNLIWVRK).

Directly interacts with SKP1 and CUL1. In terms of tissue distribution, expressed in testis.

Functionally, substrate-recognition component of the SCF (SKP1-CUL1-F-box protein)-type E3 ubiquitin ligase complex. The polypeptide is F-box only protein 15 (Fbxo15) (Mus musculus (Mouse)).